Here is a 429-residue protein sequence, read N- to C-terminus: Zinc-regulated GTPase metalloprotein activator 1 (429 aa).

Positions 15-22 (GELPCLVT) match the psi-PxLVp motif motif. 78-85 (GYLGSGKS) contacts GTP. Cys136, Cys138, and Cys139 together coordinate Zn(2+). The CXCC motif motif lies at 136–139 (CLCC). Residues 139-143 (CSLKN) and 244-247 (NKYD) each bind GTP. Positions 362 to 428 (RDWEVQRTKG…SIEELLRKTL (67 aa)) constitute a CobW C-terminal domain.

The protein belongs to the SIMIBI class G3E GTPase family. ZNG1 subfamily.

It catalyses the reaction GTP + H2O = GDP + phosphate + H(+). Its function is as follows. Zinc chaperone that directly transfers zinc cofactor to target metalloproteins, thereby activating them. Catalyzes zinc insertion into the active site of methionine aminopeptidase MAP1, which function to cleave the initiator methionine from polypeptides during or after protein translation. Mechanistically, the N-terminal psi-PxLVp motif binds to the C6H2-type zinc finger of inactive form of MAP1. After formation of the docked complex, zinc is transferred from the CXCC motif in the GTPase domain of ZNG1 to the zinc binding site in the peptidase domain of MAP1 in a process requiring GTP hydrolysis. GTP/GDP exchange is required for release of active MAP1. This chain is Zinc-regulated GTPase metalloprotein activator 1, found in Saccharomyces cerevisiae (strain ATCC 204508 / S288c) (Baker's yeast).